A 30-amino-acid chain; its full sequence is Snaclec carinactivase-1 regulatory subunit 17 kDa chain (30 aa).

In terms of domain architecture, C-type lectin spans 1–30; it reads DCLPGWSSHEGHCYKVFNQEMYWADAEKFC. The cysteines at positions 2 and 13 are disulfide-linked.

Belongs to the snaclec family. As to quaternary structure, heterodimer of a metalloproteinase subunit and a regulatory subunit comprising two polypeptides disulfide-linked (14 kDa and 17 kDa chains). As to expression, expressed by the venom gland.

It is found in the secreted. Its function is as follows. Calcium-dependent prothrombin activator. This protein may activate prothrombin via recognition by the regulatory subunit of the calcium ion bound conformation of its gamma-carboxyglutamic acid (GLA) domain, and the subsequent conversion of prothrombin to active thrombin is catalyzed by the catalytic subunit. This Echis carinatus (Saw-scaled viper) protein is Snaclec carinactivase-1 regulatory subunit 17 kDa chain.